The primary structure comprises 206 residues: MSLYFTTLFLLLTVEMVMLFIFVLPLPFRIRRGIFSTYNQLTAKQQIKTIIFITGCLVGLLFIDSWKRSQIRVSLYHNDNSGSIGSSAVTPIQALASRAYNQRNMYISGFILYFSICIPTVMSIVKRLVKYQGLINEQEKQKLNKPSSNSKKDSNEADSTKLQEELRKKQISLEGLQKQVKNLEKYFDEKNQPGNVAAAEASKKGN.

Over 1–7 (MSLYFTT) the chain is Lumenal. A helical transmembrane segment spans residues 8–28 (LFLLLTVEMVMLFIFVLPLPF). Residues 29 to 45 (RIRRGIFSTYNQLTAKQ) lie on the Cytoplasmic side of the membrane. Residues 46 to 66 (QIKTIIFITGCLVGLLFIDSW) form a helical membrane-spanning segment. Residues 67 to 104 (KRSQIRVSLYHNDNSGSIGSSAVTPIQALASRAYNQRN) lie on the Lumenal side of the membrane. The chain crosses the membrane as a helical span at residues 105-125 (MYISGFILYFSICIPTVMSIV). Residues 126–206 (KRLVKYQGLI…AAAEASKKGN (81 aa)) are Cytoplasmic-facing. The segment at 140–163 (KQKLNKPSSNSKKDSNEADSTKLQ) is disordered. A compositionally biased stretch (basic and acidic residues) spans 150–163 (SKKDSNEADSTKLQ). Lys190 participates in a covalent cross-link: Glycyl lysine isopeptide (Lys-Gly) (interchain with G-Cter in ubiquitin). The Di-lysine motif signature appears at 203-206 (KKGN).

It belongs to the BCAP29/BCAP31 family.

It localises to the endoplasmic reticulum membrane. Functionally, may play a role in anterograde transport of membrane proteins from the endoplasmic reticulum to the Golgi. The polypeptide is Endoplasmic reticulum transmembrane protein 1 (YET1) (Saccharomyces cerevisiae (strain ATCC 204508 / S288c) (Baker's yeast)).